The following is a 498-amino-acid chain: Probable malate:quinone oxidoreductase (498 aa).

Belongs to the MQO family. The cofactor is FAD.

The enzyme catalyses (S)-malate + a quinone = a quinol + oxaloacetate. It participates in carbohydrate metabolism; tricarboxylic acid cycle; oxaloacetate from (S)-malate (quinone route): step 1/1. This Granulibacter bethesdensis (strain ATCC BAA-1260 / CGDNIH1) protein is Probable malate:quinone oxidoreductase.